A 165-amino-acid chain; its full sequence is Thiol peroxidase (165 aa).

Positions 18 to 165 (PQKGAQAPAF…PNYAAALAAL (148 aa)) constitute a Thioredoxin domain. Cys60 functions as the Cysteine sulfenic acid (-SOH) intermediate in the catalytic mechanism. A disulfide bond links Cys60 and Cys94.

Belongs to the peroxiredoxin family. Tpx subfamily. In terms of assembly, homodimer.

It carries out the reaction a hydroperoxide + [thioredoxin]-dithiol = an alcohol + [thioredoxin]-disulfide + H2O. Functionally, thiol-specific peroxidase that catalyzes the reduction of hydrogen peroxide and organic hydroperoxides to water and alcohols, respectively. Plays a role in cell protection against oxidative stress by detoxifying peroxides. In Pseudomonas aeruginosa (strain ATCC 15692 / DSM 22644 / CIP 104116 / JCM 14847 / LMG 12228 / 1C / PRS 101 / PAO1), this protein is Thiol peroxidase.